We begin with the raw amino-acid sequence, 542 residues long: Organic anion transporter 3 (542 aa).

Over 1–9 the chain is Cytoplasmic; the sequence is MTFSEILDR. A Phosphoserine modification is found at serine 4. A helical membrane pass occupies residues 10–30; that stretch reads VGSMGPFQFLHVALLGFPILG. Residues 31-123 are Extracellular-facing; that stretch reads MANHNLLQIF…LVCSSNKLKE (93 aa). Asparagine 86 is a glycosylation site (N-linked (GlcNAc...) asparagine). Residues 124–144 form a helical membrane-spanning segment; sequence MAQSIFMAGILIGGLVLGDLS. Residues 145–150 lie on the Cytoplasmic side of the membrane; that stretch reads DRFGRK. Residues 151-171 traverse the membrane as a helical segment; it reads PILTCCYLLLAASGSSTAFSP. Topologically, residues 172 to 176 are extracellular; sequence TLPIY. A helical membrane pass occupies residues 177-197; that stretch reads MVFRFLCGFSISGISLSTVIL. The Cytoplasmic portion of the chain corresponds to 198–212; the sequence is NVEWVPTKMRAITST. A helical membrane pass occupies residues 213 to 233; sequence AIGYCYTIGQFILPGLAYAIP. At 234–236 the chain is on the extracellular side; sequence QWR. The chain crosses the membrane as a helical span at residues 237-257; it reads WLQLTVSVPYFIFSLLSWWIP. Over 258-327 the chain is Cytoplasmic; that stretch reads ESIRWLVLAG…FRTPILRRVT (70 aa). The helical transmembrane segment at 328-348 threads the bilayer; the sequence is LCLSLAWFATGFAYYSLAMGV. At 349 to 354 the chain is on the extracellular side; sequence EEFGVN. Residues 355–375 traverse the membrane as a helical segment; that stretch reads IYILQIIFGGVDIPAKFITIL. Residues 376–389 are Cytoplasmic-facing; it reads SLSYLGRHITQGAA. The helical transmembrane segment at 390–410 threads the bilayer; it reads LILAGAAILSLIFVPMDMSLL. Residue arginine 411 is a topological domain, extracellular. A helical transmembrane segment spans residues 412–432; the sequence is TILAVFGKGCLSGSFSCLFLY. Residues 433 to 471 are Cytoplasmic-facing; it reads TSELFPTVIRQTGMGISNVWARVGSMISPLVKITGEIQP. The chain crosses the membrane as a helical span at residues 472–492; sequence FIPNIIYGTVALLGGSAALFL. Residues 493 to 542 are Extracellular-facing; it reads PETLNQPLPETLEDMENWFLQSKKLKQEPEAEKASQRIPLQPSGPGVDRS. A compositionally biased stretch (basic and acidic residues) spans 518-527; it reads KQEPEAEKAS. Residues 518–542 form a disordered region; that stretch reads KQEPEAEKASQRIPLQPSGPGVDRS.

Belongs to the major facilitator (TC 2.A.1) superfamily. Organic cation transporter (TC 2.A.1.19) family.

The protein localises to the basolateral cell membrane. It carries out the reaction estrone 3-sulfate(out) + glutarate(in) = estrone 3-sulfate(in) + glutarate(out). The catalysed reaction is estrone 3-sulfate(in) + 2-oxoglutarate(out) = estrone 3-sulfate(out) + 2-oxoglutarate(in). It catalyses the reaction glutarate(in) + 2-oxoglutarate(out) = glutarate(out) + 2-oxoglutarate(in). The enzyme catalyses urate(in) + 2-oxoglutarate(out) = urate(out) + 2-oxoglutarate(in). It carries out the reaction taurocholate(out) + glutarate(in) = taurocholate(in) + glutarate(out). The catalysed reaction is dehydroepiandrosterone 3-sulfate(out) + glutarate(in) = dehydroepiandrosterone 3-sulfate(in) + glutarate(out). It catalyses the reaction prostaglandin F2alpha(out) + glutarate(in) = prostaglandin F2alpha(in) + glutarate(out). The enzyme catalyses prostaglandin F2alpha(out) + 2-oxoglutarate(in) = prostaglandin F2alpha(in) + 2-oxoglutarate(out). It carries out the reaction (R)-carnitine(out) + 2-oxoglutarate(in) = (R)-carnitine(in) + 2-oxoglutarate(out). The catalysed reaction is glutarate(in) + (R)-carnitine(out) = glutarate(out) + (R)-carnitine(in). It catalyses the reaction prostaglandin E2(out) + 2-oxoglutarate(in) = prostaglandin E2(in) + 2-oxoglutarate(out). The enzyme catalyses prostaglandin E2(out) + glutarate(in) = prostaglandin E2(in) + glutarate(out). It carries out the reaction urate(in) + glutarate(out) = urate(out) + glutarate(in). The catalysed reaction is taurocholate(out) + 2-oxoglutarate(in) = taurocholate(in) + 2-oxoglutarate(out). It catalyses the reaction dehydroepiandrosterone 3-sulfate(out) + 2-oxoglutarate(in) = dehydroepiandrosterone 3-sulfate(in) + 2-oxoglutarate(out). The enzyme catalyses kynurenate(out) + a dicarboxylate(in) = kynurenate(in) + a dicarboxylate(out). It carries out the reaction (indol-3-yl)acetate(out) + a dicarboxylate(in) = (indol-3-yl)acetate(in) + a dicarboxylate(out). The catalysed reaction is indoxyl sulfate(out) + a dicarboxylate(in) = indoxyl sulfate(in) + a dicarboxylate(out). It catalyses the reaction N-benzoylglycine(out) + a dicarboxylate(in) = N-benzoylglycine(in) + a dicarboxylate(out). The enzyme catalyses 3-carboxy-4-methyl-5-propyl-2-furanpropanoate(out) + a dicarboxylate(in) = 3-carboxy-4-methyl-5-propyl-2-furanpropanoate(in) + a dicarboxylate(out). It carries out the reaction (6R)-L-erythro-5,6,7,8-tetrahydrobiopterin(out) + a dicarboxylate(in) = (6R)-L-erythro-5,6,7,8-tetrahydrobiopterin(in) + a dicarboxylate(out). The catalysed reaction is L-erythro-7,8-dihydrobiopterin(out) + a dicarboxylate(in) = L-erythro-7,8-dihydrobiopterin(in) + a dicarboxylate(out). It catalyses the reaction L-sepiapterin(out) + a dicarboxylate(in) = L-sepiapterin(in) + a dicarboxylate(out). Functionally, functions as an organic anion/dicarboxylate exchanger that couples organic anion uptake indirectly to the sodium gradient. Transports organic anions such as estrone 3-sulfate (E1S) and urate in exchange for dicarboxylates such as glutarate or ketoglutarate (2-oxoglutarate). Plays an important role in the excretion of endogenous and exogenous organic anions, especially from the kidney and the brain. E1S transport is pH- and chloride-dependent and may also involve E1S/cGMP exchange. Responsible for the transport of prostaglandin E2 (PGE2) and prostaglandin F2(alpha) (PGF2(alpha)) in the basolateral side of the renal tubule. Involved in the transport of neuroactive tryptophan metabolites kynurenate and xanthurenate. Functions as a biopterin transporters involved in the uptake and the secretion of coenzymes tetrahydrobiopterin (BH4), dihydrobiopterin (BH2) and sepiapterin to urine, thereby determining baseline levels of blood biopterins. May be involved in the basolateral transport of steviol, a metabolite of the popular sugar substitute stevioside. May participate in the detoxification/ renal excretion of drugs and xenobiotics, such as the histamine H(2)-receptor antagonists fexofenadine and cimetidine, the antibiotic benzylpenicillin (PCG), the anionic herbicide 2,4-dichloro-phenoxyacetate (2,4-D), the diagnostic agent p-aminohippurate (PAH), the antiviral acyclovir (ACV), and the mycotoxin ochratoxin (OTA), by transporting these exogenous organic anions across the cell membrane in exchange for dicarboxylates such as 2-oxoglutarate. Contributes to the renal uptake of potent uremic toxins (indoxyl sulfate (IS), indole acetate (IA), hippurate/N-benzoylglycine (HA) and 3-carboxy-4-methyl-5-propyl-2-furanpropionate (CMPF)), pravastatin, PCG, E1S and dehydroepiandrosterone sulfate (DHEAS), and is partly involved in the renal uptake of temocaprilat (an angiotensin-converting enzyme (ACE) inhibitor). May contribute to the release of cortisol in the adrenals. Involved in one of the detoxification systems on the choroid plexus (CP), removes substrates such as E1S or taurocholate (TC), PCG, 2,4-D and PAH, from the cerebrospinal fluid (CSF) to the blood for eventual excretion in urine and bile. Also contributes to the uptake of several other organic compounds such as the prostanoids prostaglandin E(2) and prostaglandin F(2-alpha), L-carnitine, and the therapeutic drugs allopurinol, 6-mercaptopurine (6-MP) and 5-fluorouracil (5-FU). Mediates the transport of PAH, PCG, and the statins pravastatin and pitavastatin, from the cerebrum into the blood circulation across the blood-brain barrier (BBB). In summary, plays a role in the efflux of drugs and xenobiotics, helping reduce their undesired toxicological effects on the body. This Oryctolagus cuniculus (Rabbit) protein is Organic anion transporter 3 (SLC22A8).